Here is a 434-residue protein sequence, read N- to C-terminus: Enolase (434 aa).

His-158 and Glu-167 together coordinate substrate. Residue Glu-210 is the Proton donor of the active site. Mg(2+) is bound by residues Asp-245, Glu-294, and Asp-319. Substrate-binding residues include Glu-294 and Asp-319. Lys-344 acts as the Proton acceptor in catalysis. Substrate-binding positions include 371–374 (SHRS) and Lys-395.

It belongs to the enolase family. As to quaternary structure, homodimer. Mg(2+) is required as a cofactor.

The protein resides in the cytoplasm. The enzyme catalyses (2R)-2-phosphoglycerate = phosphoenolpyruvate + H2O. Its pathway is carbohydrate degradation; glycolysis; pyruvate from D-glyceraldehyde 3-phosphate: step 4/5. This chain is Enolase (ENO), found in Schistosoma mansoni (Blood fluke).